Here is a 570-residue protein sequence, read N- to C-terminus: Urease subunit alpha 1 (570 aa).

A Urease domain is found at 131–570 (GGIDTHVHFI…VPMAQRYFLF (440 aa)). Residues histidine 136, histidine 138, and lysine 219 each coordinate Ni(2+). Lysine 219 bears the N6-carboxylysine mark. Position 221 (histidine 221) interacts with substrate. Ni(2+)-binding residues include histidine 248 and histidine 274. The active-site Proton donor is the histidine 322. Aspartate 362 lines the Ni(2+) pocket.

The protein belongs to the metallo-dependent hydrolases superfamily. Urease alpha subunit family. Heterotrimer of UreA (gamma), UreB (beta) and UreC (alpha) subunits. Three heterotrimers associate to form the active enzyme. The cofactor is Ni cation. Post-translationally, carboxylation allows a single lysine to coordinate two nickel ions.

It is found in the cytoplasm. It carries out the reaction urea + 2 H2O + H(+) = hydrogencarbonate + 2 NH4(+). Its pathway is nitrogen metabolism; urea degradation; CO(2) and NH(3) from urea (urease route): step 1/1. May protect brucellae during their passage through the stomach. The major route of infection in human brucellosis is oral. The polypeptide is Urease subunit alpha 1 (Brucella abortus (strain 2308)).